The chain runs to 206 residues: Small ribosomal subunit protein uS4 (206 aa).

The 61-residue stretch at 96–156 (GRLDNVVYRM…EKAKKQARIK (61 aa)) folds into the S4 RNA-binding domain.

Belongs to the universal ribosomal protein uS4 family. In terms of assembly, part of the 30S ribosomal subunit. Contacts protein S5. The interaction surface between S4 and S5 is involved in control of translational fidelity.

Its function is as follows. One of the primary rRNA binding proteins, it binds directly to 16S rRNA where it nucleates assembly of the body of the 30S subunit. Functionally, with S5 and S12 plays an important role in translational accuracy. The protein is Small ribosomal subunit protein uS4 of Tolumonas auensis (strain DSM 9187 / NBRC 110442 / TA 4).